Reading from the N-terminus, the 589-residue chain is Arginine--tRNA ligase (589 aa).

The 'HIGH' region motif lies at 131-141 (ANPTGPLHVGH).

Belongs to the class-I aminoacyl-tRNA synthetase family. Monomer.

The protein resides in the cytoplasm. The catalysed reaction is tRNA(Arg) + L-arginine + ATP = L-arginyl-tRNA(Arg) + AMP + diphosphate. The sequence is that of Arginine--tRNA ligase from Legionella pneumophila subsp. pneumophila (strain Philadelphia 1 / ATCC 33152 / DSM 7513).